The primary structure comprises 217 residues: MSIGILGKKLGMSQLFDDKGNAVPVTLIEAGPCRVTQLKTTTLDGYSAVQIGYGLSKDKHINKPEKGHLLKSGEELLKHLKEYRVEETTSYEIGNQITVKNFEVGQKVDISGKSMGRGFAGYQKRHGFSRGPMSHGSKNHRAPGSTGAGTTPGRIYPGKRMAGRYGGKQITTKGLLVLKIDDQKNLLVIKGSVPGKPGSIVNIKPNNVVGKKGGQKS.

The tract at residues 127-162 (GFSRGPMSHGSKNHRAPGSTGAGTTPGRIYPGKRMA) is disordered. Low complexity predominate over residues 142-153 (APGSTGAGTTPG).

The protein belongs to the universal ribosomal protein uL3 family. As to quaternary structure, part of the 50S ribosomal subunit. Forms a cluster with proteins L14 and L19.

Its function is as follows. One of the primary rRNA binding proteins, it binds directly near the 3'-end of the 23S rRNA, where it nucleates assembly of the 50S subunit. In Prochlorococcus marinus (strain MIT 9312), this protein is Large ribosomal subunit protein uL3.